The sequence spans 161 residues: Ubiquitin D (161 aa).

Ubiquitin-like domains follow at residues S3–V77 and L86–I159.

This sequence belongs to the ubiquitin D family. As to quaternary structure, interacts directly with the 26S proteasome. Interacts with NUB1; this interaction facilitates the linking of UBD-conjugated target protein to the proteasome complex and accelerates its own degradation and that of its conjugates. Interacts (via ubiquitin-like 1 domain) with the spindle checkpoint protein MAD2L1 during mitosis. Present in aggresomes of proteasome inhibited cells. Interacts with HDAC6 under proteasome impairment conditions. Forms a thioester with UBA6 in cells stimulated with tumor necrosis factor-alpha (TNFa) and interferon-gamma (IFNg). Interacts with SQSTM1 and TP53/p53. Post-translationally, can be acetylated.

Its subcellular location is the nucleus. It localises to the cytoplasm. In terms of biological role, ubiquitin-like protein modifier which can be covalently attached to target proteins and subsequently leads to their degradation by the 26S proteasome, in a NUB1-dependent manner. Conjugation to the target protein is activated by UBA6 via adenylation of its C-terminal glycine. Probably functions as a survival factor. Promotes the expression of the proteasome subunit beta type-9 (PSMB9/LMP2). Regulates TNF-alpha-induced and LPS-mediated activation of the central mediator of innate immunity NF-kappa-B by promoting TNF-alpha-mediated proteasomal degradation of ubiquitinated-I-kappa-B-alpha. Required for TNF-alpha-induced p65 nuclear translocation in renal tubular epithelial cells (RTECs). May be involved in dendritic cell (DC) maturation, the process by which immature dendritic cells differentiate into fully competent antigen-presenting cells that initiate T-cell responses. Mediates mitotic non-disjunction and chromosome instability, in long-term in vitro culture and cancers, by abbreviating mitotic phase and impairing the kinetochore localization of MAD2L1 during the prometaphase stage of the cell cycle. May be involved in the formation of aggresomes when proteasome is saturated or impaired. Mediates apoptosis in a caspase-dependent manner, especially in renal epithelium and tubular cells during renal diseases. The chain is Ubiquitin D (Ubd) from Rattus norvegicus (Rat).